Here is a 22-residue protein sequence, read N- to C-terminus: Myofibril-bound serine protease (22 aa).

Residues 1-22 (IVGGYECEAYSKPYQVSINLGY) form the Peptidase S1 domain.

It belongs to the peptidase S1 family. In terms of tissue distribution, detected in skeletal muscle (at protein level).

It is found in the cytoplasm. In terms of biological role, serine protease which degrades the myosin heavy chain and tropomyosin, but not actin. Selectively cleaves Arg-|-Xaa bonds. The chain is Myofibril-bound serine protease from Saurida undosquamis (Brushtooth lizardfish).